A 218-amino-acid chain; its full sequence is Histidine biosynthesis bifunctional protein HisIE (218 aa).

Residues 1–118 (MTDLSELNFD…DAPDTGLDGT (118 aa)) form a phosphoribosyl-AMP cyclohydrolase region. A phosphoribosyl-ATP pyrophosphohydrolase region spans residues 119 to 218 (LERVYATITE…SGLKGPKEVG (100 aa)).

In the N-terminal section; belongs to the PRA-CH family. The protein in the C-terminal section; belongs to the PRA-PH family.

It localises to the cytoplasm. The catalysed reaction is 1-(5-phospho-beta-D-ribosyl)-ATP + H2O = 1-(5-phospho-beta-D-ribosyl)-5'-AMP + diphosphate + H(+). The enzyme catalyses 1-(5-phospho-beta-D-ribosyl)-5'-AMP + H2O = 1-(5-phospho-beta-D-ribosyl)-5-[(5-phospho-beta-D-ribosylamino)methylideneamino]imidazole-4-carboxamide. It functions in the pathway amino-acid biosynthesis; L-histidine biosynthesis; L-histidine from 5-phospho-alpha-D-ribose 1-diphosphate: step 2/9. The protein operates within amino-acid biosynthesis; L-histidine biosynthesis; L-histidine from 5-phospho-alpha-D-ribose 1-diphosphate: step 3/9. This chain is Histidine biosynthesis bifunctional protein HisIE (hisI), found in Deinococcus radiodurans (strain ATCC 13939 / DSM 20539 / JCM 16871 / CCUG 27074 / LMG 4051 / NBRC 15346 / NCIMB 9279 / VKM B-1422 / R1).